The chain runs to 468 residues: ATP-dependent protease ATPase subunit HslU (468 aa).

Residues Val22 and 64–69 (GVGKTE) contribute to the ATP site. The tract at residues 166-187 (FGNNDEEDEEPPTEDIKTKRSE) is disordered. Residues 169–178 (NDEEDEEPPT) are compositionally biased toward acidic residues. 3 residues coordinate ATP: Asp281, Glu346, and Arg418.

The protein belongs to the ClpX chaperone family. HslU subfamily. As to quaternary structure, a double ring-shaped homohexamer of HslV is capped on each side by a ring-shaped HslU homohexamer. The assembly of the HslU/HslV complex is dependent on binding of ATP.

It is found in the cytoplasm. In terms of biological role, ATPase subunit of a proteasome-like degradation complex; this subunit has chaperone activity. The binding of ATP and its subsequent hydrolysis by HslU are essential for unfolding of protein substrates subsequently hydrolyzed by HslV. HslU recognizes the N-terminal part of its protein substrates and unfolds these before they are guided to HslV for hydrolysis. The polypeptide is ATP-dependent protease ATPase subunit HslU (Staphylococcus carnosus (strain TM300)).